A 128-amino-acid chain; its full sequence is MDIPKDRFYTKTHEWALPEGDTVLVGITDYAQDALGDVVYVELPEVGRVVEKGEAVAVVESVKTASDIYAPVAGEIVEVNLALEKTPELVNQDPYGEGWIFRLKPRDMGDLDELLDAEGYQEVLESEA.

The Lipoyl-binding domain maps to 22 to 104 (TVLVGITDYA…YGEGWIFRLK (83 aa)). Lysine 63 carries the post-translational modification N6-lipoyllysine.

It belongs to the GcvH family. The glycine cleavage system is composed of four proteins: P, T, L and H. (R)-lipoate is required as a cofactor.

The glycine cleavage system catalyzes the degradation of glycine. The H protein shuttles the methylamine group of glycine from the P protein to the T protein. This is Glycine cleavage system H protein from Thermus thermophilus (strain ATCC BAA-163 / DSM 7039 / HB27).